We begin with the raw amino-acid sequence, 136 residues long: uncharacterized protein (136 aa).

This is an uncharacterized protein from Pasteurella multocida (strain Pm70).